The sequence spans 281 residues: CDAN1-interacting nuclease 1 (281 aa).

Thr-114 bears the Phosphothreonine mark.

It is found in the nucleus. It localises to the cytoplasm. Its function is as follows. Plays a role in erythroid cell differentiation. The protein is CDAN1-interacting nuclease 1 of Mus musculus (Mouse).